A 167-amino-acid chain; its full sequence is NAD(P)H-quinone oxidoreductase subunit I, chloroplastic (167 aa).

4Fe-4S ferredoxin-type domains are found at residues Gly-55 to Lys-84 and Leu-95 to Glu-124. [4Fe-4S] cluster-binding residues include Cys-64, Cys-67, Cys-70, Cys-74, Cys-104, Cys-107, Cys-110, and Cys-114.

The protein belongs to the complex I 23 kDa subunit family. As to quaternary structure, NDH is composed of at least 16 different subunits, 5 of which are encoded in the nucleus. [4Fe-4S] cluster serves as cofactor.

It localises to the plastid. The protein resides in the chloroplast thylakoid membrane. The enzyme catalyses a plastoquinone + NADH + (n+1) H(+)(in) = a plastoquinol + NAD(+) + n H(+)(out). The catalysed reaction is a plastoquinone + NADPH + (n+1) H(+)(in) = a plastoquinol + NADP(+) + n H(+)(out). NDH shuttles electrons from NAD(P)H:plastoquinone, via FMN and iron-sulfur (Fe-S) centers, to quinones in the photosynthetic chain and possibly in a chloroplast respiratory chain. The immediate electron acceptor for the enzyme in this species is believed to be plastoquinone. Couples the redox reaction to proton translocation, and thus conserves the redox energy in a proton gradient. The sequence is that of NAD(P)H-quinone oxidoreductase subunit I, chloroplastic from Jasminum nudiflorum (Winter jasmine).